Here is a 148-residue protein sequence, read N- to C-terminus: Ponticulin-like protein D (148 aa).

The signal sequence occupies residues 1–20 (MLLNKSLLLLVAFVFAIVSA). The N-linked (GlcNAc...) asparagine glycan is linked to Asn-67. Asp-125 carries the GPI-like-anchor amidated aspartate lipid modification. The propeptide at 126–148 (SSAAATMIASFSAILIALLFALL) is removed in mature form.

It belongs to the ponticulin family. The GPI-like-anchor contains a phosphoceramide group, rather than a phosphatidyl group.

It is found in the cell membrane. This Dictyostelium discoideum (Social amoeba) protein is Ponticulin-like protein D (ponD).